A 256-amino-acid polypeptide reads, in one-letter code: Thiazole synthase (256 aa).

Lysine 95 acts as the Schiff-base intermediate with DXP in catalysis. 1-deoxy-D-xylulose 5-phosphate-binding positions include glycine 156, 182-183 (AG), and 204-205 (NT).

It belongs to the ThiG family. In terms of assembly, homotetramer. Forms heterodimers with either ThiH or ThiS.

Its subcellular location is the cytoplasm. The enzyme catalyses [ThiS sulfur-carrier protein]-C-terminal-Gly-aminoethanethioate + 2-iminoacetate + 1-deoxy-D-xylulose 5-phosphate = [ThiS sulfur-carrier protein]-C-terminal Gly-Gly + 2-[(2R,5Z)-2-carboxy-4-methylthiazol-5(2H)-ylidene]ethyl phosphate + 2 H2O + H(+). It functions in the pathway cofactor biosynthesis; thiamine diphosphate biosynthesis. Functionally, catalyzes the rearrangement of 1-deoxy-D-xylulose 5-phosphate (DXP) to produce the thiazole phosphate moiety of thiamine. Sulfur is provided by the thiocarboxylate moiety of the carrier protein ThiS. In vitro, sulfur can be provided by H(2)S. In Escherichia coli O8 (strain IAI1), this protein is Thiazole synthase.